Here is a 232-residue protein sequence, read N- to C-terminus: MKAGIIGAMEEEVTLLRDKIDNRQTLTIAGCEIYTGTLNGVDVALLKSGIGKVSAAMGATLLLEHCKPDVIINTGSAGGLAPSLKVGDIVVSDEVRYHDADVTAFGYEYGQMAGCPAAFKADEKLIAAAQETIEKLNLHAVRGLVVSGDAFINGSVNLAKIRHNFPQAIAVEMEATAIGHVCHNFGVPFVVVRAISDVADQQSHLSFEEFLAVAAKQSSLMVETLLTSLNRG.

The Proton acceptor role is filled by E12. Residues G78, I152, and 173–174 (ME) contribute to the substrate site. The active-site Proton donor is D197.

Belongs to the PNP/UDP phosphorylase family. MtnN subfamily. In terms of assembly, homodimer.

The catalysed reaction is S-adenosyl-L-homocysteine + H2O = S-(5-deoxy-D-ribos-5-yl)-L-homocysteine + adenine. It catalyses the reaction S-methyl-5'-thioadenosine + H2O = 5-(methylsulfanyl)-D-ribose + adenine. It carries out the reaction 5'-deoxyadenosine + H2O = 5-deoxy-D-ribose + adenine. It participates in amino-acid biosynthesis; L-methionine biosynthesis via salvage pathway; S-methyl-5-thio-alpha-D-ribose 1-phosphate from S-methyl-5'-thioadenosine (hydrolase route): step 1/2. Functionally, catalyzes the irreversible cleavage of the glycosidic bond in both 5'-methylthioadenosine (MTA) and S-adenosylhomocysteine (SAH/AdoHcy) to adenine and the corresponding thioribose, 5'-methylthioribose and S-ribosylhomocysteine, respectively. Also cleaves 5'-deoxyadenosine, a toxic by-product of radical S-adenosylmethionine (SAM) enzymes, into 5-deoxyribose and adenine. Thus, is required for in vivo function of the radical SAM enzymes biotin synthase and lipoic acid synthase, that are inhibited by 5'-deoxyadenosine accumulation. This chain is 5'-methylthioadenosine/S-adenosylhomocysteine nucleosidase, found in Cronobacter sakazakii (strain ATCC BAA-894) (Enterobacter sakazakii).